A 54-amino-acid polypeptide reads, in one-letter code: Ovomucoid (54 aa).

The Kazal-like domain maps to 4–54; it reads VDCSDYPKPSCTLEDKPLCGSDNQTYSNKCSFCNAVVDSNGTLTLSHFGKC. 3 cysteine pairs are disulfide-bonded: cysteine 6-cysteine 36, cysteine 14-cysteine 33, and cysteine 22-cysteine 54. A glycan (N-linked (GlcNAc...) asparagine) is linked at asparagine 43.

The protein resides in the secreted. This is Ovomucoid from Megapodius freycinet (Dusky scrubfowl).